The primary structure comprises 368 residues: Agmatine deiminase (368 aa).

The active-site Amidino-cysteine intermediate is cysteine 357.

The protein belongs to the agmatine deiminase family. In terms of assembly, homodimer.

It carries out the reaction agmatine + H2O = N-carbamoylputrescine + NH4(+). Its pathway is amine and polyamine biosynthesis; putrescine biosynthesis via agmatine pathway; N-carbamoylputrescine from agmatine: step 1/1. Functionally, mediates the hydrolysis of agmatine into N-carbamoylputrescine in the arginine decarboxylase (ADC) pathway of putrescine biosynthesis, a basic polyamine. The chain is Agmatine deiminase from Pseudomonas syringae pv. tomato (strain ATCC BAA-871 / DC3000).